Reading from the N-terminus, the 426-residue chain is Glutamate-1-semialdehyde 2,1-aminomutase (426 aa).

The residue at position 265 (Lys-265) is an N6-(pyridoxal phosphate)lysine.

This sequence belongs to the class-III pyridoxal-phosphate-dependent aminotransferase family. HemL subfamily. As to quaternary structure, homodimer. It depends on pyridoxal 5'-phosphate as a cofactor.

The protein resides in the cytoplasm. The enzyme catalyses (S)-4-amino-5-oxopentanoate = 5-aminolevulinate. Its pathway is porphyrin-containing compound metabolism; protoporphyrin-IX biosynthesis; 5-aminolevulinate from L-glutamyl-tRNA(Glu): step 2/2. This is Glutamate-1-semialdehyde 2,1-aminomutase from Enterobacter sp. (strain 638).